The chain runs to 224 residues: Cytidylate kinase (224 aa).

11–19 (GPAAAGKST) provides a ligand contact to ATP.

The protein belongs to the cytidylate kinase family. Type 1 subfamily.

It is found in the cytoplasm. The enzyme catalyses CMP + ATP = CDP + ADP. It carries out the reaction dCMP + ATP = dCDP + ADP. This Geobacillus thermodenitrificans (strain NG80-2) protein is Cytidylate kinase.